Reading from the N-terminus, the 244-residue chain is DNA polymerase sliding clamp (244 aa).

This sequence belongs to the PCNA family. In terms of assembly, homotrimer. The subunits circularize to form a toroid; DNA passes through its center. Replication factor C (RFC) is required to load the toroid on the DNA.

Functionally, sliding clamp subunit that acts as a moving platform for DNA processing. Responsible for tethering the catalytic subunit of DNA polymerase and other proteins to DNA during high-speed replication. The protein is DNA polymerase sliding clamp of Methanobrevibacter smithii (strain ATCC 35061 / DSM 861 / OCM 144 / PS).